Consider the following 459-residue polypeptide: uncharacterized protein (459 aa).

2 consecutive transmembrane segments (helical) span residues 53-75 (IPLLPVLALSVGALTVLGQGLTL) and 111-133 (ARIARVLLLVAGVFTLVIVCLCA). A disordered region spans residues 174–196 (HLDNPSAPHPSENPQSRAHPKQN).

Its subcellular location is the cell membrane. This is an uncharacterized protein from Treponema pallidum (strain Nichols).